A 386-amino-acid chain; its full sequence is 2,3-diketo-5-methylthiopentyl-1-phosphate enolase (386 aa).

Catalysis depends on K85, which acts as the Proton acceptor. Residues K131, K157 to E160, H248, G316, and G338 to T339 contribute to the substrate site. Mg(2+) contacts are provided by K157, D159, and E160. Residue K157 is modified to N6-carboxylysine.

It belongs to the RuBisCO large chain family. Type IV subfamily. As to quaternary structure, homodimer. Mg(2+) serves as cofactor.

It carries out the reaction 5-methylsulfanyl-2,3-dioxopentyl phosphate = 2-hydroxy-5-methylsulfanyl-3-oxopent-1-enyl phosphate. Its pathway is amino-acid biosynthesis; L-methionine biosynthesis via salvage pathway; L-methionine from S-methyl-5-thio-alpha-D-ribose 1-phosphate: step 3/6. Catalyzes the enolization of 2,3-diketo-5-methylthiopentyl-1-phosphate (DK-MTP-1-P) into 2-hydroxy-3-keto-5-methylthiopentenyl-1-phosphate (HK-MTPenyl-1-P). This is 2,3-diketo-5-methylthiopentyl-1-phosphate enolase (mtnW) from Microcystis aeruginosa.